The chain runs to 366 residues: Capsular polysaccharide phosphotransferase LcbA (366 aa).

It belongs to the stealth family.

The protein is Capsular polysaccharide phosphotransferase LcbA (lcbA) of Neisseria meningitidis.